Reading from the N-terminus, the 502-residue chain is Cytochrome P450 3A5 (502 aa).

Cysteine 441 contacts heme.

It belongs to the cytochrome P450 family. Requires heme as cofactor.

It localises to the endoplasmic reticulum membrane. Its subcellular location is the microsome membrane. It catalyses the reaction an organic molecule + reduced [NADPH--hemoprotein reductase] + O2 = an alcohol + oxidized [NADPH--hemoprotein reductase] + H2O + H(+). It carries out the reaction 17beta-estradiol + reduced [NADPH--hemoprotein reductase] + O2 = 2-hydroxy-17beta-estradiol + oxidized [NADPH--hemoprotein reductase] + H2O + H(+). The enzyme catalyses 17beta-estradiol + reduced [NADPH--hemoprotein reductase] + O2 = 4-hydroxy-17beta-estradiol + oxidized [NADPH--hemoprotein reductase] + H2O + H(+). The catalysed reaction is estrone + reduced [NADPH--hemoprotein reductase] + O2 = 2-hydroxyestrone + oxidized [NADPH--hemoprotein reductase] + H2O + H(+). It catalyses the reaction estrone + reduced [NADPH--hemoprotein reductase] + O2 = 4-hydroxyestrone + oxidized [NADPH--hemoprotein reductase] + H2O + H(+). It carries out the reaction testosterone + reduced [NADPH--hemoprotein reductase] + O2 = 6beta,17beta-dihydroxyandrost-4-en-3-one + oxidized [NADPH--hemoprotein reductase] + H2O + H(+). The enzyme catalyses androst-4-ene-3,17-dione + reduced [NADPH--hemoprotein reductase] + O2 = 6beta-hydroxyandrost-4-ene-3,17-dione + oxidized [NADPH--hemoprotein reductase] + H2O + H(+). The catalysed reaction is progesterone + reduced [NADPH--hemoprotein reductase] + O2 = 6beta-hydroxyprogesterone + oxidized [NADPH--hemoprotein reductase] + H2O + H(+). It catalyses the reaction all-trans-retinol + reduced [NADPH--hemoprotein reductase] + O2 = all-trans-retinal + oxidized [NADPH--hemoprotein reductase] + 2 H2O + H(+). It carries out the reaction all-trans-retinoate + reduced [NADPH--hemoprotein reductase] + O2 = all-trans-4-hydroxyretinoate + oxidized [NADPH--hemoprotein reductase] + H2O + H(+). The protein operates within steroid hormone biosynthesis. Its pathway is cofactor metabolism; retinol metabolism. Its function is as follows. A cytochrome P450 monooxygenase involved in the metabolism of steroid hormones and vitamins. Mechanistically, uses molecular oxygen inserting one oxygen atom into a substrate, and reducing the second into a water molecule, with two electrons provided by NADPH via cytochrome P450 reductase (NADPH--hemoprotein reductase). Catalyzes the hydroxylation of carbon-hydrogen bonds. Exhibits high catalytic activity for the formation of catechol estrogens from 17beta-estradiol (E2) and estrone (E1), namely 2-hydroxy E1 and E2. Catalyzes 6beta-hydroxylation of the steroid hormones testosterone, progesterone, and androstenedione. Catalyzes the oxidative conversion of all-trans-retinol to all-trans-retinal, a rate-limiting step for the biosynthesis of all-trans-retinoic acid (atRA). Further metabolizes all trans-retinoic acid (atRA) to 4-hydroxyretinoate and may play a role in hepatic atRA clearance. Also involved in the oxidative metabolism of xenobiotics, including calcium channel blocking drug nifedipine and immunosuppressive drug cyclosporine. In Homo sapiens (Human), this protein is Cytochrome P450 3A5.